Here is a 107-residue protein sequence, read N- to C-terminus: Proteinase inhibitor 1 (107 aa).

The N-terminal stretch at 1-23 (MELKFAHIIVFFLLATSFETLMA) is a signal peptide. A propeptide spanning residues 24 to 36 (RKESDGPEVIQLL) is cleaved from the precursor.

It belongs to the protease inhibitor I13 (potato type I serine protease inhibitor) family.

The protein is Proteinase inhibitor 1 of Solanum tuberosum (Potato).